The following is a 101-amino-acid chain: Large ribosomal subunit protein uL24 (101 aa).

It belongs to the universal ribosomal protein uL24 family. Part of the 50S ribosomal subunit.

Its function is as follows. One of two assembly initiator proteins, it binds directly to the 5'-end of the 23S rRNA, where it nucleates assembly of the 50S subunit. Functionally, one of the proteins that surrounds the polypeptide exit tunnel on the outside of the subunit. In Lactococcus lactis subsp. lactis (strain IL1403) (Streptococcus lactis), this protein is Large ribosomal subunit protein uL24.